We begin with the raw amino-acid sequence, 119 residues long: Photosystem II extrinsic protein V (119 aa).

Heme c-binding residues include cysteine 36, cysteine 39, and histidine 40.

It belongs to the cytochrome c family. PsbV subfamily. In terms of assembly, PSII is composed of 1 copy each of membrane proteins PsbA, PsbB, PsbC, PsbD, PsbE, PsbF, PsbH, PsbI, PsbJ, PsbK, PsbL, PsbM, PsbT, PsbX, PsbY, PsbZ, Psb30/Ycf12, peripheral proteins PsbO, CyanoQ (PsbQ), PsbU, PsbV and a large number of cofactors. It forms dimeric complexes. Requires heme c as cofactor.

The protein localises to the cellular thylakoid membrane. One of the extrinsic, lumenal subunits of photosystem II (PSII). PSII is a light-driven water plastoquinone oxidoreductase, using light energy to abstract electrons from H(2)O, generating a proton gradient subsequently used for ATP formation. The extrinsic proteins stabilize the structure of photosystem II oxygen-evolving complex (OEC), the ion environment of oxygen evolution and protect the OEC against heat-induced inactivation. Low-potential cytochrome c that plays a role in the OEC of PSII. The polypeptide is Photosystem II extrinsic protein V (psbV) (Aphanizomenon flos-aquae).